A 40-amino-acid polypeptide reads, in one-letter code: Allophycocyanin alpha-B chain (40 aa).

It belongs to the phycobiliprotein family. In terms of assembly, heterodimer of an alpha and a beta chain. In terms of processing, contains one covalently linked bilin chromophore.

It is found in the cellular thylakoid membrane. Functionally, light-harvesting photosynthetic bile pigment-protein from the phycobiliprotein complex. Allophycocyanin has a maximum absorption at approximately 650 nanometers. The chain is Allophycocyanin alpha-B chain from Mastigocladus laminosus (Fischerella sp.).